The following is a 34-amino-acid chain: Toxin Ptu1 (34 aa).

3 disulfides stabilise this stretch: Cys5/Cys20, Cys12/Cys26, and Cys19/Cys33.

It localises to the secreted. In terms of biological role, binds reversibly and blocks N-type voltage-gated calcium channels (Cav). The polypeptide is Toxin Ptu1 (Peirates turpis (Assassin bug)).